Reading from the N-terminus, the 350-residue chain is Small ribosomal subunit biogenesis GTPase RsgA (350 aa).

The span at 1-17 shows a compositional bias: polar residues; it reads MSKNKLSKGQQRRVNAN. The tract at residues 1–33 is disordered; sequence MSKNKLSKGQQRRVNANHQRRLKTSKEKPDYDD. One can recognise a CP-type G domain in the interval 104–273; it reads TSVLTRPDFY…VIDSPGVREF (170 aa). GTP-binding positions include 160–163 and 214–222; these read NKID and GQSGVGKSS. Positions 297, 302, 304, and 310 each coordinate Zn(2+).

Belongs to the TRAFAC class YlqF/YawG GTPase family. RsgA subfamily. As to quaternary structure, monomer. Associates with 30S ribosomal subunit, binds 16S rRNA. The cofactor is Zn(2+).

The protein resides in the cytoplasm. Its function is as follows. One of several proteins that assist in the late maturation steps of the functional core of the 30S ribosomal subunit. Helps release RbfA from mature subunits. May play a role in the assembly of ribosomal proteins into the subunit. Circularly permuted GTPase that catalyzes slow GTP hydrolysis, GTPase activity is stimulated by the 30S ribosomal subunit. The polypeptide is Small ribosomal subunit biogenesis GTPase RsgA (Escherichia fergusonii (strain ATCC 35469 / DSM 13698 / CCUG 18766 / IAM 14443 / JCM 21226 / LMG 7866 / NBRC 102419 / NCTC 12128 / CDC 0568-73)).